A 270-amino-acid polypeptide reads, in one-letter code: Chymotrypsin-like elastase family member 3A (270 aa).

Residues 1–15 constitute a signal peptide (or 16); sequence MMLRLLSSLLLVAVA. Residues 16–28 constitute a propeptide, activation peptide; it reads SGYGPPSSHSSSR. The Peptidase S1 domain occupies 29-268; that stretch reads VVHGEDAVPY…FIDWIEETIA (240 aa). An intrachain disulfide couples Cys58 to Cys74. His73 serves as the catalytic Charge relay system. Residue Asn114 is glycosylated (N-linked (GlcNAc...) asparagine). An intrachain disulfide couples Cys117 to Cys120. Asp123 acts as the Charge relay system in catalysis. Disulfide bonds link Cys157–Cys223, Cys188–Cys204, and Cys213–Cys244. Ser217 acts as the Charge relay system in catalysis.

The protein belongs to the peptidase S1 family. Elastase subfamily.

It carries out the reaction Preferential cleavage: Ala-|-Xaa. Does not hydrolyze elastin.. Functionally, efficient protease with alanine specificity but only little elastolytic activity. The polypeptide is Chymotrypsin-like elastase family member 3A (CELA3A) (Homo sapiens (Human)).